The chain runs to 197 residues: Syndecan-4 (197 aa).

An N-terminal signal peptide occupies residues 1 to 19 (MPLPRAAFLLGLLLAAAAA). Residues 20–147 (ESVRETETMD…SIFERTEVLT (128 aa)) lie on the Extracellular side of the membrane. Residues serine 38, serine 65, and serine 67 are each glycosylated (O-linked (Xyl...) (glycosaminoglycan) serine). Asparagine 124 and asparagine 136 each carry an N-linked (GlcNAc...) asparagine glycan. A helical transmembrane segment spans residues 148–168 (ALIAGGAVGLLFAVFLILLLV). Topologically, residues 169–197 (YRMKKKDEGSYDLGKKPIYKKAPTNEFYA) are cytoplasmic.

This sequence belongs to the syndecan proteoglycan family. Interacts with SDOS. In terms of processing, O-glycosylated; contains both chondroitin sulfate and heparan sulfate. Ser-38, Ser-65 and Ser-67 can all be modified by either chondroitin sulfate or heparan sulfate, and the protein exists in forms that contain only chondroitin sulfate, only heparan sulfate and both chondroitin sulfate and heparan sulfate.

Its subcellular location is the membrane. Its function is as follows. Cell surface proteoglycan which regulates exosome biogenesis in concert with SDCBP and PDCD6IP. The sequence is that of Syndecan-4 (SDC4) from Gallus gallus (Chicken).